Reading from the N-terminus, the 346-residue chain is Elongation factor Ts (346 aa).

The segment at 80 to 83 (TDFV) is involved in Mg(2+) ion dislocation from EF-Tu.

Belongs to the EF-Ts family.

Its subcellular location is the cytoplasm. Associates with the EF-Tu.GDP complex and induces the exchange of GDP to GTP. It remains bound to the aminoacyl-tRNA.EF-Tu.GTP complex up to the GTP hydrolysis stage on the ribosome. The sequence is that of Elongation factor Ts from Streptococcus pneumoniae (strain 70585).